Here is a 274-residue protein sequence, read N- to C-terminus: Thiazole synthase (274 aa).

Catalysis depends on K115, which acts as the Schiff-base intermediate with DXP. 1-deoxy-D-xylulose 5-phosphate-binding positions include G176, 202-203 (AG), and 224-225 (NS).

The protein belongs to the ThiG family. Homotetramer. Forms heterodimers with either ThiH or ThiS.

The protein localises to the cytoplasm. It catalyses the reaction [ThiS sulfur-carrier protein]-C-terminal-Gly-aminoethanethioate + 2-iminoacetate + 1-deoxy-D-xylulose 5-phosphate = [ThiS sulfur-carrier protein]-C-terminal Gly-Gly + 2-[(2R,5Z)-2-carboxy-4-methylthiazol-5(2H)-ylidene]ethyl phosphate + 2 H2O + H(+). It functions in the pathway cofactor biosynthesis; thiamine diphosphate biosynthesis. In terms of biological role, catalyzes the rearrangement of 1-deoxy-D-xylulose 5-phosphate (DXP) to produce the thiazole phosphate moiety of thiamine. Sulfur is provided by the thiocarboxylate moiety of the carrier protein ThiS. In vitro, sulfur can be provided by H(2)S. This chain is Thiazole synthase, found in Psychrobacter cryohalolentis (strain ATCC BAA-1226 / DSM 17306 / VKM B-2378 / K5).